The chain runs to 111 residues: Probable 4-amino-4-deoxy-L-arabinose-phosphoundecaprenol flippase subunit ArnE (111 aa).

3 helical membrane-spanning segments follow: residues 38 to 58, 61 to 81, and 91 to 111; these read LWLG…LLVL, LPVG…TLAA, and PRHW…GSAA. The EamA domain occupies 40–109; sequence LGLALICMGA…IISGIIILGS (70 aa).

The protein belongs to the ArnE family. As to quaternary structure, heterodimer of ArnE and ArnF.

Its subcellular location is the cell inner membrane. Its pathway is bacterial outer membrane biogenesis; lipopolysaccharide biosynthesis. Functionally, translocates 4-amino-4-deoxy-L-arabinose-phosphoundecaprenol (alpha-L-Ara4N-phosphoundecaprenol) from the cytoplasmic to the periplasmic side of the inner membrane. The sequence is that of Probable 4-amino-4-deoxy-L-arabinose-phosphoundecaprenol flippase subunit ArnE from Salmonella agona (strain SL483).